The following is a 285-amino-acid chain: Acetyl-coenzyme A carboxylase carboxyl transferase subunit beta (285 aa).

Residues 23–285 (VFRRCDGCSH…HLTAGRRARR (263 aa)) enclose the CoA carboxyltransferase N-terminal domain. Zn(2+) is bound by residues C27, C30, C46, and C49. Residues 27-49 (CDGCSHTHDAAELARTFEVCSQC) form a C4-type zinc finger.

It belongs to the AccD/PCCB family. Acetyl-CoA carboxylase is a heterohexamer composed of biotin carboxyl carrier protein (AccB), biotin carboxylase (AccC) and two subunits each of ACCase subunit alpha (AccA) and ACCase subunit beta (AccD). Zn(2+) is required as a cofactor.

The protein resides in the cytoplasm. The catalysed reaction is N(6)-carboxybiotinyl-L-lysyl-[protein] + acetyl-CoA = N(6)-biotinyl-L-lysyl-[protein] + malonyl-CoA. It participates in lipid metabolism; malonyl-CoA biosynthesis; malonyl-CoA from acetyl-CoA: step 1/1. Component of the acetyl coenzyme A carboxylase (ACC) complex. Biotin carboxylase (BC) catalyzes the carboxylation of biotin on its carrier protein (BCCP) and then the CO(2) group is transferred by the transcarboxylase to acetyl-CoA to form malonyl-CoA. The chain is Acetyl-coenzyme A carboxylase carboxyl transferase subunit beta from Sorangium cellulosum (strain So ce56) (Polyangium cellulosum (strain So ce56)).